Reading from the N-terminus, the 332-residue chain is Methionine synthase (332 aa).

The Zn(2+) site is built by histidine 211, cysteine 213, and cysteine 296.

It belongs to the archaeal MetE family. Zn(2+) serves as cofactor.

It participates in amino-acid biosynthesis; L-methionine biosynthesis via de novo pathway. Functionally, catalyzes the transfer of a methyl group to L-homocysteine resulting in methionine formation. The physiological methyl donor is unknown. This Saccharolobus islandicus (strain Y.G.57.14 / Yellowstone #1) (Sulfolobus islandicus) protein is Methionine synthase.